The chain runs to 534 residues: Probable protein kinase UbiB (534 aa).

Residues 23-43 form a helical membrane-spanning segment; that stretch reads DLLFDLPLPWFLLALRFALPW. The Protein kinase domain maps to 125-492; sequence RFDIEPLASA…WHKRKDDWFL (368 aa). ATP-binding positions include 131–139 and Lys153; that span reads LASASVAQV. Residue Asp288 is the Proton acceptor of the active site. Transmembrane regions (helical) follow at residues 490-510 and 512-532; these read WFLRLLGTAHLGGGAVLAAGG and LHELGHWPAGIMIAVGLYLIV.

Belongs to the ABC1 family. UbiB subfamily.

It is found in the cell inner membrane. It participates in cofactor biosynthesis; ubiquinone biosynthesis [regulation]. In terms of biological role, is probably a protein kinase regulator of UbiI activity which is involved in aerobic coenzyme Q (ubiquinone) biosynthesis. This chain is Probable protein kinase UbiB, found in Pseudomonas fluorescens (strain ATCC BAA-477 / NRRL B-23932 / Pf-5).